A 30-amino-acid polypeptide reads, in one-letter code: Trypsin inhibitor 3 (30 aa).

Pyrrolidone carboxylic acid is present on glutamine 1. Cystine bridges form between cysteine 4–cysteine 21, cysteine 11–cysteine 23, and cysteine 17–cysteine 29.

It localises to the secreted. Inhibits trypsin; probably participates in a plant defense mechanism. In Momordica cochinchinensis (Spiny bitter cucumber), this protein is Trypsin inhibitor 3.